The following is a 316-amino-acid chain: Ribosomal RNA small subunit methyltransferase H (316 aa).

Residues 35–37 (SGH), D55, F84, D105, and Q112 each bind S-adenosyl-L-methionine.

The protein belongs to the methyltransferase superfamily. RsmH family.

It localises to the cytoplasm. The catalysed reaction is cytidine(1402) in 16S rRNA + S-adenosyl-L-methionine = N(4)-methylcytidine(1402) in 16S rRNA + S-adenosyl-L-homocysteine + H(+). Its function is as follows. Specifically methylates the N4 position of cytidine in position 1402 (C1402) of 16S rRNA. The polypeptide is Ribosomal RNA small subunit methyltransferase H (Streptococcus pyogenes serotype M18 (strain MGAS8232)).